Consider the following 340-residue polypeptide: DNA repair protein RAD51 homolog B (340 aa).

A disordered region spans residues Met1–Gly22. Positions Thr49 to Ala78 constitute a HhH domain. Position 128 to 135 (Gly128 to Thr135) interacts with ATP.

Belongs to the RecA family. RAD51 subfamily. As to quaternary structure, self-associates and may interact with XRCC3 homolog. As to expression, highly expressed in mitotic and meiotic tissues, but low levels in differentiated tissues.

It localises to the nucleus. Functionally, binds to single and double-stranded DNA and exhibits DNA-dependent ATPase activity. Unwinds duplex DNA. Component of the meiotic recombination pathway. Seems to play a role in mediating chromosome homology search, chromosome pairing and synapsis at early stages and probably chromosome crossing-over at later stages in meiosis. Probably is involved in the repair of meiotic double strand breaks (DBSs) and in homologous recombination. The chain is DNA repair protein RAD51 homolog B (RAD51B) from Zea mays (Maize).